The chain runs to 102 residues: Urease subunit beta (102 aa).

The protein belongs to the urease beta subunit family. As to quaternary structure, heterotrimer of UreA (gamma), UreB (beta) and UreC (alpha) subunits. Three heterotrimers associate to form the active enzyme.

Its subcellular location is the cytoplasm. The catalysed reaction is urea + 2 H2O + H(+) = hydrogencarbonate + 2 NH4(+). Its pathway is nitrogen metabolism; urea degradation; CO(2) and NH(3) from urea (urease route): step 1/1. The protein is Urease subunit beta of Opitutus terrae (strain DSM 11246 / JCM 15787 / PB90-1).